Reading from the N-terminus, the 416-residue chain is Squamosa promoter-binding-like protein 8 (416 aa).

Residues 11–51 (SSCDDFGYNATPPPPPSLLPIMDQDGGGGSIQRDHHQHHNH) are disordered. The SBP-type zinc finger occupies 182–260 (PPRCQAEGCK…ADHNRRRRKS (79 aa)). C185, C190, C207, H210, C227, C230, H234, and C246 together coordinate Zn(2+). The short motif at 243–259 (KKSCRKRLADHNRRRRK) is the Bipartite nuclear localization signal element. A disordered region spans residues 250 to 299 (LADHNRRRRKSKPSDGEHSGEKRRAQANKSAATKDKAGSSSKNAGIGDGF). Over residues 261–273 (KPSDGEHSGEKRR) the composition is skewed to basic and acidic residues.

Expressed in stems, leaf sheaths, and young panicles. Weakly expressed in ligules, auricles, and leaf sheaths at the basal region.

Its subcellular location is the nucleus. Its function is as follows. Probable transcription factor that plays an important role in building the laminar joint between leaf blade and leaf sheath boundary, thereby controlling ligule and auricle development. The sequence is that of Squamosa promoter-binding-like protein 8 (SPL8) from Oryza sativa subsp. japonica (Rice).